We begin with the raw amino-acid sequence, 292 residues long: Succinate dehydrogenase assembly factor 2, mitochondrial (292 aa).

2 disordered regions span residues 27–68 and 266–292; these read RSFG…NTTS and TGFHAAKSKKTGGAGLGRMPNVQVFDS. The span at 55-68 shows a compositional bias: polar residues; sequence TNRPPNQHVPNTTS.

The protein belongs to the SDHAF2 family. Interacts with the flavoprotein subunit within the SDH catalytic dimer.

Its subcellular location is the mitochondrion matrix. In terms of biological role, plays an essential role in the assembly of succinate dehydrogenase (SDH), an enzyme complex (also referred to as respiratory complex II) that is a component of both the tricarboxylic acid (TCA) cycle and the mitochondrial electron transport chain, and which couples the oxidation of succinate to fumarate with the reduction of ubiquinone (coenzyme Q) to ubiquinol. Required for flavinylation (covalent attachment of FAD) of the flavoprotein subunit of the SDH catalytic dimer. The chain is Succinate dehydrogenase assembly factor 2, mitochondrial from Aspergillus flavus (strain ATCC 200026 / FGSC A1120 / IAM 13836 / NRRL 3357 / JCM 12722 / SRRC 167).